Here is a 188-residue protein sequence, read N- to C-terminus: Phospholipase A2 inhibitor 31 kDa subunit (188 aa).

Cystine bridges form between C3/C27, C6/C13, C20/C48, C54/C75, C76/C81, C99/C124, C117/C146, and C150/C172. N157 carries N-linked (GlcNAc...) asparagine glycosylation.

This sequence belongs to the CNF-like-inhibitor family. In terms of assembly, heterodimer with phospholipase A2 inhibitor 25 kDa. In terms of processing, N-glycosylated. As to expression, expressed by the liver.

Its subcellular location is the secreted. Functionally, inhibits the enzymatic activity of phospholipase A2. This chain is Phospholipase A2 inhibitor 31 kDa subunit, found in Naja kaouthia (Monocled cobra).